We begin with the raw amino-acid sequence, 39 residues long: Osmotin-like protein (39 aa).

It belongs to the thaumatin family. In terms of processing, contains intrachain disulfide bonds.

Functionally, may be an important antifungal protein. This is Osmotin-like protein from Hevea brasiliensis (Para rubber tree).